We begin with the raw amino-acid sequence, 441 residues long: Peroxisome proliferator-activated receptor delta (441 aa).

The segment covering 1–22 (MEQPQEEAPEVREEEEKEEVAE) has biased composition (acidic residues). Positions 1–54 (MEQPQEEAPEVREEEEKEEVAEAEGAPELNGGPQHALPSSSYTDLSRSSSPPSL) are disordered. Low complexity predominate over residues 37–54 (LPSSSYTDLSRSSSPPSL). A DNA-binding region (nuclear receptor) is located at residues 71 to 145 (NMECRVCGDK…LGMSHNAIRF (75 aa)). 2 NR C4-type zinc fingers span residues 74–94 (CRVC…CEGC) and 111–133 (CERS…FQKC). The NR LBD domain occupies 211–439 (FVIHDIETLW…HPLLQEIYKD (229 aa)).

It belongs to the nuclear hormone receptor family. NR1 subfamily. As to quaternary structure, heterodimer with the retinoid X receptor. Interacts (via domain NR LBD) with CRY1 and CRY2 in a ligand-dependent manner. 'Lys-48'-linked polyubiquitinated; leading to proteasomal degradation. Deubiquitinated and stabilized by OTUD3. As to expression, ubiquitous with maximal levels in placenta and skeletal muscle.

It localises to the nucleus. In terms of biological role, ligand-activated transcription factor key mediator of energy metabolism in adipose tissues. Receptor that binds peroxisome proliferators such as hypolipidemic drugs and fatty acids. Has a preference for poly-unsaturated fatty acids, such as gamma-linoleic acid and eicosapentanoic acid. Once activated by a ligand, the receptor binds to promoter elements of target genes. Regulates the peroxisomal beta-oxidation pathway of fatty acids. Functions as transcription activator for the acyl-CoA oxidase gene. Decreases expression of NPC1L1 once activated by a ligand. This is Peroxisome proliferator-activated receptor delta from Homo sapiens (Human).